A 245-amino-acid chain; its full sequence is Demethylmenaquinone methyltransferase (245 aa).

S-adenosyl-L-methionine-binding positions include threonine 69, aspartate 90, and 118-119; that span reads DC.

It belongs to the class I-like SAM-binding methyltransferase superfamily. MenG/UbiE family.

It carries out the reaction a 2-demethylmenaquinol + S-adenosyl-L-methionine = a menaquinol + S-adenosyl-L-homocysteine + H(+). Its pathway is quinol/quinone metabolism; menaquinone biosynthesis; menaquinol from 1,4-dihydroxy-2-naphthoate: step 2/2. Functionally, methyltransferase required for the conversion of demethylmenaquinol (DMKH2) to menaquinol (MKH2). This chain is Demethylmenaquinone methyltransferase, found in Porphyromonas gingivalis (strain ATCC 33277 / DSM 20709 / CIP 103683 / JCM 12257 / NCTC 11834 / 2561).